The following is a 68-amino-acid chain: Large ribosomal subunit protein uL29 (68 aa).

Belongs to the universal ribosomal protein uL29 family.

The protein is Large ribosomal subunit protein uL29 of Rhodopseudomonas palustris (strain BisB18).